A 245-amino-acid polypeptide reads, in one-letter code: Ribonuclease 3 (245 aa).

In terms of domain architecture, RNase III spans 17–146 (FAKKMNELGF…FVGALYLDQG (130 aa)). Glu-59 provides a ligand contact to Mg(2+). Asp-63 is an active-site residue. Asp-132 and Glu-135 together coordinate Mg(2+). Glu-135 is a catalytic residue. The DRBM domain occupies 172-241 (DFKTQFQEYV…AESAYSKLKS (70 aa)). The segment at 217-245 (ATGQGKTKKESEQKAAESAYSKLKSNNNL) is disordered.

The protein belongs to the ribonuclease III family. In terms of assembly, homodimer. The cofactor is Mg(2+).

The protein localises to the cytoplasm. The enzyme catalyses Endonucleolytic cleavage to 5'-phosphomonoester.. Functionally, digests double-stranded RNA. Involved in the processing of primary rRNA transcript to yield the immediate precursors to the large and small rRNAs (23S and 16S). Processes some mRNAs, and tRNAs when they are encoded in the rRNA operon. Processes pre-crRNA and tracrRNA of type II CRISPR loci if present in the organism. The sequence is that of Ribonuclease 3 from Staphylococcus haemolyticus (strain JCSC1435).